Here is a 425-residue protein sequence, read N- to C-terminus: 2-oxoglutarate and iron-dependent oxygenase JMJD4 (425 aa).

A JmjC domain is found at 141-300 (SRAFPEQDVY…IMWCFLQDEL (160 aa)). Residues His-188, Asp-190, and His-268 each coordinate Fe cation.

The protein belongs to the JMJD6 family. The cofactor is Fe(2+).

Its subcellular location is the cytoplasm. The catalysed reaction is L-lysyl-[protein] + 2-oxoglutarate + O2 = 4-hydroxy-L-lysyl-[protein] + succinate + CO2. Its function is as follows. Catalyzes the 2-oxoglutarate and iron-dependent C4-lysyl hydroxylation of ETF1 at 'Lys-63' thereby promoting the translational termination efficiency of ETF1. In Gallus gallus (Chicken), this protein is 2-oxoglutarate and iron-dependent oxygenase JMJD4 (JMJD4).